Reading from the N-terminus, the 445-residue chain is ATP-dependent protease ATPase subunit HslU (445 aa).

Residues isoleucine 17, 59-64 (GVGKTE), aspartate 254, glutamate 319, and arginine 391 contribute to the ATP site.

This sequence belongs to the ClpX chaperone family. HslU subfamily. In terms of assembly, a double ring-shaped homohexamer of HslV is capped on each side by a ring-shaped HslU homohexamer. The assembly of the HslU/HslV complex is dependent on binding of ATP.

It localises to the cytoplasm. In terms of biological role, ATPase subunit of a proteasome-like degradation complex; this subunit has chaperone activity. The binding of ATP and its subsequent hydrolysis by HslU are essential for unfolding of protein substrates subsequently hydrolyzed by HslV. HslU recognizes the N-terminal part of its protein substrates and unfolds these before they are guided to HslV for hydrolysis. In Pseudomonas savastanoi pv. phaseolicola (strain 1448A / Race 6) (Pseudomonas syringae pv. phaseolicola (strain 1448A / Race 6)), this protein is ATP-dependent protease ATPase subunit HslU.